A 150-amino-acid polypeptide reads, in one-letter code: Macrodomain Ter protein (150 aa).

It belongs to the MatP family. Homodimer.

It localises to the cytoplasm. Its function is as follows. Required for spatial organization of the terminus region of the chromosome (Ter macrodomain) during the cell cycle. Prevents early segregation of duplicated Ter macrodomains during cell division. Binds specifically to matS, which is a 13 bp signature motif repeated within the Ter macrodomain. The sequence is that of Macrodomain Ter protein from Salmonella arizonae (strain ATCC BAA-731 / CDC346-86 / RSK2980).